Here is a 332-residue protein sequence, read N- to C-terminus: GTPase Obg (332 aa).

One can recognise an Obg domain in the interval 1–159; sequence MKFLDQAKIY…RWVWLRLKLI (159 aa). Residues 160-328 enclose the OBG-type G domain; that stretch reads ADAGLVGLPN…VLRETLRMIR (169 aa). GTP is bound by residues 166-173, 191-195, 213-216, 280-283, and 309-311; these read GLPNAGKS, FTTLH, DIPG, NKMD, and SAA. Ser-173 and Thr-193 together coordinate Mg(2+).

This sequence belongs to the TRAFAC class OBG-HflX-like GTPase superfamily. OBG GTPase family. As to quaternary structure, monomer. The cofactor is Mg(2+).

Its subcellular location is the cytoplasm. Its function is as follows. An essential GTPase which binds GTP, GDP and possibly (p)ppGpp with moderate affinity, with high nucleotide exchange rates and a fairly low GTP hydrolysis rate. Plays a role in control of the cell cycle, stress response, ribosome biogenesis and in those bacteria that undergo differentiation, in morphogenesis control. The chain is GTPase Obg from Acidiphilium cryptum (strain JF-5).